Consider the following 67-residue polypeptide: Large ribosomal subunit protein bL31 (67 aa).

The protein belongs to the bacterial ribosomal protein bL31 family. Type A subfamily. As to quaternary structure, part of the 50S ribosomal subunit.

Binds the 23S rRNA. The protein is Large ribosomal subunit protein bL31 of Leptospira borgpetersenii serovar Hardjo-bovis (strain JB197).